Reading from the N-terminus, the 85-residue chain is Putative sodium channel toxin Ts37 (85 aa).

The first 20 residues, 1 to 20 (MAGEWACLLVSLVLLWGAAG), serve as a signal peptide directing secretion. The LCN-type CS-alpha/beta domain maps to 22–83 (RDGFLLDRNF…KIWGDSVRCR (62 aa)). 4 cysteine pairs are disulfide-bonded: Cys32-Cys82, Cys36-Cys59, Cys45-Cys64, and Cys49-Cys66.

This sequence belongs to the long (4 C-C) scorpion toxin superfamily. Sodium channel inhibitor family. As to expression, expressed by the venom gland.

It is found in the secreted. In terms of biological role, putative sodium channel toxin. The sequence is that of Putative sodium channel toxin Ts37 from Tityus serrulatus (Brazilian scorpion).